The sequence spans 385 residues: S-type anion channel SLAH1 (385 aa).

At 1 to 42 (MEIPRQEIHIEIDNSIPSSKEFKTGLADAKPVVLMSALRSLH) the chain is on the cytoplasmic side. Residues 43 to 65 (AGYFRISLSLCSQALLWKIMIAP) form a helical membrane-spanning segment. Topologically, residues 66–81 (ESPSMSHMHSKLPSMA) are extracellular. Residues 82–102 (FHLLWYLALVTQVSLCFLYAL) form a helical membrane-spanning segment. At 103–114 (KCIFFFDKVKEE) the chain is on the cytoplasmic side. A helical membrane pass occupies residues 115–135 (FLHYIGVNYLYAPSISWLLML). Topologically, residues 136–150 (QSAPMMEPNSVLYQT) are extracellular. Residues 151–171 (LFWIFAVPVLTLDIKLYGQWF) form a helical membrane-spanning segment. Residues 172 to 176 (TTEKR) are Cytoplasmic-facing. Residues 177 to 197 (FLSMLANPASQVSVIANLVAA) form a helical membrane-spanning segment. Residues 198-207 (RGAAEMGWNE) lie on the Extracellular side of the membrane. Residues 208-228 (CALCMFSLGMVHYLVIFVTLY) form a helical membrane-spanning segment. Residues 229–243 (QRLPGGNNFPAKLRP) lie on the Cytoplasmic side of the membrane. The helical transmembrane segment at 244–264 (IFFLFVAAPAMASLAWNSICG) threads the bilayer. A topological domain (extracellular) is located at residue Thr265. A helical membrane pass occupies residues 266 to 286 (FDAVAKMLFFLSLFIFMSLVC). Over 287 to 299 (RPNLFKKSMKRFN) the chain is Cytoplasmic. Residues 300–320 (VAWWAYSFPLTFLALDSVQYA) form a helical membrane-spanning segment. Residues 321–330 (QEVKDPVGSG) are Extracellular-facing. The helical transmembrane segment at 331–351 (LMLIFSSISVLIFLGMMVLTA) threads the bilayer. The Cytoplasmic portion of the chain corresponds to 352 to 385 (ANSNRLLRHDPVLGSATDPKDKQKTLSLNATNQN). Residues 366–385 (SATDPKDKQKTLSLNATNQN) form a disordered region. The span at 376 to 385 (TLSLNATNQN) shows a compositional bias: polar residues.

Belongs to the SLAC1 S-type anion channel family. As to quaternary structure, homotrimer. In terms of tissue distribution, expressed in the vascular systems of root.

It is found in the cell membrane. In terms of biological role, slow, weak voltage-dependent S-type anion efflux channel involved in maintenance of anion homeostasis. This chain is S-type anion channel SLAH1 (SLAH1), found in Arabidopsis thaliana (Mouse-ear cress).